The following is a 246-amino-acid chain: Protein lin-37 homolog (246 aa).

Met1 bears the N-acetylmethionine mark. Residues Lys5 and Lys7 each participate in a glycyl lysine isopeptide (Lys-Gly) (interchain with G-Cter in SUMO2) cross-link. Over residues 39–55 the composition is skewed to basic and acidic residues; it reads RLDEEAGKTPLDTHNKD. 2 disordered regions span residues 39-90 and 129-208; these read RLDE…GGPQ and VRER…TLIY. Residues Ser135 and Ser138 each carry the phosphoserine modification. Phosphothreonine is present on Thr167. Ser182 and Ser202 each carry phosphoserine.

Component of the DREAM complex (also named LINC complex) at least composed of E2F4, E2F5, LIN9, LIN37, LIN52, LIN54, MYBL1, MYBL2, RBL1, RBL2, RBBP4, TFDP1 and TFDP2. The complex exists in quiescent cells where it represses cell cycle-dependent genes. It dissociates in S phase when LIN9, LIN37, LIN52 and LIN54 form a subcomplex that binds to MYBL2.

The protein is Protein lin-37 homolog (Lin37) of Mus musculus (Mouse).